The primary structure comprises 61 residues: Potassium channel toxin alpha-KTx 15.6 (61 aa).

The N-terminal stretch at 1-23 is a signal peptide; the sequence is MKAFYGMLVIFILCSTCYISVDS. Gln24 carries the pyrrolidone carboxylic acid modification. Disulfide bonds link Cys31–Cys52, Cys37–Cys57, and Cys41–Cys59.

The protein belongs to the short scorpion toxin superfamily. Potassium channel inhibitor family. Alpha-KTx 15 subfamily. As to expression, expressed by the venom gland.

The protein resides in the secreted. In terms of biological role, irreversibly blocks the A-type voltage-gated potassium channels in rat cerebellum granular cells (190 nM induce 50% inhibitory effect) (IC(50)=190 nM). Also weakly inhibits Kv1.2/KCNA2 and Kv1.3/KCNA3. The sequence is that of Potassium channel toxin alpha-KTx 15.6 from Tityus discrepans (Venezuelan scorpion).